The primary structure comprises 839 residues: Taste receptor type 1 member 2 (839 aa).

The first 19 residues, 1–19 (MGPRATTICSLFFLLWVLA), serve as a signal peptide directing secretion. At 20–566 (EPAENSDFYL…AFLEWHEAPT (547 aa)) the chain is on the extracellular side. N-linked (GlcNAc...) asparagine glycosylation is found at Asn-84, Asn-248, Asn-292, Asn-312, Asn-368, Asn-428, Asn-487, and Asn-527. Residues 567–587 (IAVALLAALGFLSTLAILVIF) form a helical membrane-spanning segment. The Cytoplasmic portion of the chain corresponds to 588-602 (WRHFQTPMVRSAGGP). A helical transmembrane segment spans residues 603–623 (MCFLMLTLLLVAYMVVPVYVG). The Extracellular segment spans residues 624–635 (PPKVSTCLCRQA). The helical transmembrane segment at 636 to 656 (LFPLCFTICISCIAVRSFQII) threads the bilayer. Over 657-681 (CAFKMASRFPRAYSYWVRYQGPYVS) the chain is Cytoplasmic. Residues 682-702 (MAFITVLKMVIVVIGMLATGL) traverse the membrane as a helical segment. The Extracellular segment spans residues 703–727 (NPTTRTDPDDPKIMIVSCNPNYRNS). The chain crosses the membrane as a helical span at residues 728–748 (LLFNTSLDLLLSVVGFSFANM). Residues 749–760 (GKELPTNYNEAK) lie on the Cytoplasmic side of the membrane. The helical transmembrane segment at 761-781 (FITLSMTFYFTSSISLCTFMS) threads the bilayer. The Extracellular segment spans residues 782–784 (AYS). A helical membrane pass occupies residues 785 to 805 (GVLVTIVDLLVTVLNLLAISL). The Cytoplasmic portion of the chain corresponds to 806–839 (GYFGPKCYMILFYPERNTPAYFNSVIQGYTMTRD).

It belongs to the G-protein coupled receptor 3 family. TAS1R subfamily. Forms heterodimers with TAS1R3.

Its subcellular location is the cell membrane. In terms of biological role, putative taste receptor. TAS1R2/TAS1R3 recognizes diverse natural and synthetic sweeteners. This is Taste receptor type 1 member 2 (TAS1R2) from Pongo pygmaeus (Bornean orangutan).